We begin with the raw amino-acid sequence, 348 residues long: Putative transport protein HI_0338 (348 aa).

Helical transmembrane passes span 7–27, 28–48, 60–80, 139–159, 196–216, 223–243, 245–265, 267–287, and 296–316; these read LHRT…VKLA, AEIV…SPII, LAIT…VGLI, VLLN…VVIF, VIGY…GVFI, VQYA…PNIG, IIAA…GIGF, VAIG…PKMM, and LVVF…GMLL.

This sequence belongs to the autoinducer-2 exporter (AI-2E) (TC 2.A.86) family.

The protein localises to the cell membrane. This is Putative transport protein HI_0338 from Haemophilus influenzae (strain ATCC 51907 / DSM 11121 / KW20 / Rd).